The chain runs to 585 residues: Arginine--tRNA ligase (585 aa).

The short motif at 127-137 is the 'HIGH' region element; sequence PNTNKPLHVGH.

This sequence belongs to the class-I aminoacyl-tRNA synthetase family. As to quaternary structure, monomer.

The protein resides in the cytoplasm. The catalysed reaction is tRNA(Arg) + L-arginine + ATP = L-arginyl-tRNA(Arg) + AMP + diphosphate. The protein is Arginine--tRNA ligase of Borrelia duttonii (strain Ly).